The following is a 72-amino-acid chain: UPF0154 protein Bcer98_2334 (72 aa).

Residues 3 to 23 (IWSGILVGVVALLAGVALGFF) form a helical membrane-spanning segment.

This sequence belongs to the UPF0154 family.

The protein localises to the cell membrane. This chain is UPF0154 protein Bcer98_2334, found in Bacillus cytotoxicus (strain DSM 22905 / CIP 110041 / 391-98 / NVH 391-98).